The following is a 196-amino-acid chain: ATP-dependent Clp protease proteolytic subunit (196 aa).

Catalysis depends on S101, which acts as the Nucleophile. The active site involves H126.

It belongs to the peptidase S14 family. In terms of assembly, component of the chloroplastic Clp protease core complex.

The protein resides in the plastid. It localises to the chloroplast stroma. The catalysed reaction is Hydrolysis of proteins to small peptides in the presence of ATP and magnesium. alpha-casein is the usual test substrate. In the absence of ATP, only oligopeptides shorter than five residues are hydrolyzed (such as succinyl-Leu-Tyr-|-NHMec, and Leu-Tyr-Leu-|-Tyr-Trp, in which cleavage of the -Tyr-|-Leu- and -Tyr-|-Trp bonds also occurs).. Its function is as follows. Cleaves peptides in various proteins in a process that requires ATP hydrolysis. Has a chymotrypsin-like activity. Plays a major role in the degradation of misfolded proteins. This is ATP-dependent Clp protease proteolytic subunit from Aethionema cordifolium (Lebanon stonecress).